Here is a 366-residue protein sequence, read N- to C-terminus: MNIMDFNMKKLAADAGTFLSRAVQFTEEKLGQAEKTELDAHLENLLSKAECTKQWTEKIMKQTEVLLQPNPNARIEEFFYEKLDRKAPSRMNNPELLGQYMIDAGNEFGPGTAYGNALIKCGETQKQIGTADRELIQTSAINFLTPLRNFIEGDYKTITKERKLLQNKRLDLDAAKTRLKKAKVAEARAASEQEVRITQSEFDRQAEITRLLLEGISSTHAHHLRCLNDFVEAQMTYYAQCYKYMLDLQKQLGSFPSTFLSNNNQSSSAPVQSVSTPSVLASASASLPSVSNSVVTSGISELKSSSGSRKARVLYDYDAANSSELSLLADEVITVYSIPGMDSDWLMGERGNQKGKVPITYLELLN.

The membrane-binding amphipathic helix stretch occupies residues 1-30 (MNIMDFNMKKLAADAGTFLSRAVQFTEEKL). Residues 1–37 (MNIMDFNMKKLAADAGTFLSRAVQFTEEKLGQAEKTE) are required for membrane binding. A BAR domain is found at 27-261 (EEKLGQAEKT…LGSFPSTFLS (235 aa)). 2 coiled-coil regions span residues 34–54 (EKTELDAHLENLLSKAECTKQ) and 160–185 (KERKLLQNKRLDLDAAKTRLKKAKVA). One can recognise an SH3 domain in the interval 306-366 (SGSRKARVLY…VPITYLELLN (61 aa)).

It belongs to the endophilin family. Homodimer, and heterodimer with SH3GLB2. Binds BAX. Binds DNM1, HTT, AMPH, BIN1 and ARFGAP1.

The protein resides in the cytoplasm. The protein localises to the golgi apparatus membrane. It localises to the mitochondrion outer membrane. Functionally, may be required for normal outer mitochondrial membrane dynamics. Required for coatomer-mediated retrograde transport in certain cells. May recruit other proteins to membranes with high curvature. May promote membrane fusion. This chain is Endophilin-B1, found in Gallus gallus (Chicken).